The following is a 484-amino-acid chain: Ferrochelatase-2, chloroplastic (484 aa).

Belongs to the ferrochelatase family.

The protein localises to the plastid. It is found in the chloroplast. The catalysed reaction is heme b + 2 H(+) = protoporphyrin IX + Fe(2+). It participates in porphyrin-containing compound metabolism; protoheme biosynthesis; protoheme from protoporphyrin-IX: step 1/1. Catalyzes the ferrous insertion into protoporphyrin IX. This Hordeum vulgare (Barley) protein is Ferrochelatase-2, chloroplastic (HEMH).